Reading from the N-terminus, the 709-residue chain is D-(-)-3-hydroxybutyrate oligomer hydrolase (709 aa).

Positions 1 to 26 (MTVFKTAPLLIAALAASSCGGGGSGA) are cleaved as a signal peptide. The interval 58-77 (GLGRSGLQDDSPPGYAGSQP) is disordered. The active-site Charge relay system is serine 305.

Belongs to the D-(-)-3-hydroxybutyrate oligomer hydrolase family.

The protein localises to the secreted. The enzyme catalyses (3R)-hydroxybutanoate dimer + H2O = 2 (R)-3-hydroxybutanoate + H(+). It functions in the pathway lipid metabolism; butanoate metabolism. Functionally, participates in the degradation of poly-3-hydroxybutyrate (PHB). It works downstream of poly(3-hydroxybutyrate) depolymerase, hydrolyzing D(-)-3-hydroxybutyrate oligomers of various length (3HB-oligomers) into 3HB-monomers. This is D-(-)-3-hydroxybutyrate oligomer hydrolase from Paracidovorax citrulli (strain AAC00-1) (Acidovorax citrulli).